The sequence spans 179 residues: Riboflavin kinase (179 aa).

61-66 (GDGEGR) contributes to the CDP binding site. Mg(2+) contacts are provided by T90 and N92. The FMN site is built by T147 and E155. 160–163 (VELR) is a CDP binding site.

Belongs to the archaeal riboflavin kinase family. It depends on Mg(2+) as a cofactor.

It catalyses the reaction riboflavin + CTP = CDP + FMN + H(+). It participates in cofactor biosynthesis; FMN biosynthesis; FMN from riboflavin (CTP route): step 1/1. In terms of biological role, catalyzes the CTP-dependent phosphorylation of riboflavin (vitamin B2) to form flavin mononucleotide (FMN). In Ignicoccus hospitalis (strain KIN4/I / DSM 18386 / JCM 14125), this protein is Riboflavin kinase.